The chain runs to 262 residues: Integral membrane protein 2B (262 aa).

Residues 1-49 (MVKVSFNSALAHKEAANKEEENSQVLILPPDAKEPEDVVVPAGHKRAWC) lie on the Cytoplasmic side of the membrane. A helical; Signal-anchor for type II membrane protein membrane pass occupies residues 50-70 (WCMCFGLAFMLAGVILGGAYL). The Lumenal segment spans residues 71–262 (YKYFAFQQGG…FAMETLICEQ (192 aa)). One can recognise a BRICHOS domain in the interval 132-226 (FADSDPADIV…LCRGKETYKL (95 aa)). 2 cysteine pairs are disulfide-bonded: cysteine 159/cysteine 218 and cysteine 243/cysteine 260. The N-linked (GlcNAc...) asparagine glycan is linked to asparagine 165.

The protein belongs to the ITM2 family. As to quaternary structure, homodimer; disulfide-linked. Expressed in areas of chondro-osteogenic transition and widely in the nervous system.

The protein resides in the golgi apparatus membrane. Its subcellular location is the cell membrane. It localises to the endosome membrane. Functionally, plays a role in the induction of neurite outgrowth. This Gallus gallus (Chicken) protein is Integral membrane protein 2B (ITM2B).